The chain runs to 979 residues: Protocadherin alpha-9 (979 aa).

The N-terminal stretch at 1–59 is a signal peptide; sequence MRLGNRPEDIRTCVHLRWHIHGLLRQENASVVISKCLRHGAWRLLLWLLLLATWDVGSG. The Extracellular portion of the chain corresponds to 60 to 726; it reads QLHYSVPEEA…RREASLMDVN (667 aa). Cadherin domains lie at 64–163, 164–272, 273–380, 381–485, 486–595, and 611–707; these read SVPE…PPIF, SVAE…APVF, DRSV…APEI, VLTS…APAF, AHPE…PPTL, and VSRS…VPKA. Residues N287 and N295 are each glycosylated (N-linked (GlcNAc...) asparagine). N-linked (GlcNAc...) asparagine glycosylation occurs at N578. A helical transmembrane segment spans residues 727–747; sequence VYLIIAICAVSSLLVLTLLLY. Over 748–979 the chain is Cytoplasmic; it reads TALRCSAVPM…GNSTTDNSDQ (232 aa). PXXP repeat units follow at residues 763–766, 828–831, 861–864, 902–905, and 920–923; these read LGKP, PRQP, PGGP, PGNP, and PGSP. A 5 X 4 AA repeats of P-X-X-P region spans residues 763 to 923; it reads LGKPTLVCSS…PDKFIIPGSP (161 aa). Residues 859 to 979 are disordered; sequence AGPGGPDQQW…GNSTTDNSDQ (121 aa). Positions 938 to 952 are enriched in basic and acidic residues; the sequence is DKSDFITFGKKEETK.

The protein localises to the cell membrane. In terms of biological role, potential calcium-dependent cell-adhesion protein. May be involved in the establishment and maintenance of specific neuronal connections in the brain. In Mus musculus (Mouse), this protein is Protocadherin alpha-9.